Reading from the N-terminus, the 347-residue chain is Globoside alpha-1,3-N-acetylgalactosaminyltransferase 1 (347 aa).

Over 1–6 (MTRPRL) the chain is Cytoplasmic. The chain crosses the membrane as a helical; Signal-anchor for type II membrane protein span at residues 7 to 27 (AQGLAFFLLGGTGLWVLWKFI). The Lumenal segment spans residues 28 to 347 (KDWLLVSYIP…VKKNANWLRT (320 aa)). The N-linked (GlcNAc...) asparagine glycan is linked to asparagine 108. Residues 116–121 (FAVGKY), 206–208 (DVD), and 228–231 (HPGY) each bind substrate. Aspartate 206 and aspartate 208 together coordinate Mn(2+). Catalysis depends on glutamate 298, which acts as the Nucleophile.

This sequence belongs to the glycosyltransferase 6 family. Requires Mn(2+) as cofactor.

The protein resides in the golgi apparatus membrane. It catalyses the reaction a globoside Gb4Cer (d18:1(4E)) + UDP-N-acetyl-alpha-D-galactosamine = a globoside Forssman (d18:1(4E)) + UDP + H(+). The catalysed reaction is a globoside Gb4Cer + UDP-N-acetyl-alpha-D-galactosamine = a globoside IV3GalNAc-Gb4Cer + UDP + H(+). It participates in protein modification; protein glycosylation. Its function is as follows. Catalyzes the formation of Forssman glycolipid via the addition of N-acetylgalactosamine (GalNAc) in alpha-1,3-linkage to GalNAcb-1,3Gala-1,4Galb-1,4GlcCer (Gb4Cer). Forssman glycolipid (also called Forssman antigen; FG) probably serves for adherence of some pathogens. Conversely, it diminishes Shiga toxins susceptibility. The polypeptide is Globoside alpha-1,3-N-acetylgalactosaminyltransferase 1 (Mus musculus (Mouse)).